A 98-amino-acid chain; its full sequence is NADH-ubiquinone oxidoreductase chain 4L (98 aa).

The next 3 helical transmembrane spans lie at 1 to 21 (MTHIMFTFSTAFMLGLSGLTF), 26 to 46 (LLSALLCLEGMMLSLFIALAM), and 59 to 79 (APLLLLALSACEAGLGLSLLV).

This sequence belongs to the complex I subunit 4L family.

It is found in the mitochondrion membrane. It carries out the reaction a ubiquinone + NADH + 5 H(+)(in) = a ubiquinol + NAD(+) + 4 H(+)(out). Functionally, core subunit of the mitochondrial membrane respiratory chain NADH dehydrogenase (Complex I) which catalyzes electron transfer from NADH through the respiratory chain, using ubiquinone as an electron acceptor. Part of the enzyme membrane arm which is embedded in the lipid bilayer and involved in proton translocation. The sequence is that of NADH-ubiquinone oxidoreductase chain 4L (MT-ND4L) from Polypterus ornatipinnis (Ornate bichir).